A 96-amino-acid chain; its full sequence is Co-chaperonin GroES (96 aa).

The protein belongs to the GroES chaperonin family. As to quaternary structure, heptamer of 7 subunits arranged in a ring. Interacts with the chaperonin GroEL.

The protein resides in the cytoplasm. Functionally, together with the chaperonin GroEL, plays an essential role in assisting protein folding. The GroEL-GroES system forms a nano-cage that allows encapsulation of the non-native substrate proteins and provides a physical environment optimized to promote and accelerate protein folding. GroES binds to the apical surface of the GroEL ring, thereby capping the opening of the GroEL channel. This chain is Co-chaperonin GroES, found in Actinobacillus pleuropneumoniae serotype 7 (strain AP76).